A 165-amino-acid chain; its full sequence is Free methionine-R-sulfoxide reductase (165 aa).

The GAF domain maps to 49 to 149 (LLEDDTLVLG…LRQLVAQLEK (101 aa)).

The protein belongs to the free Met sulfoxide reductase family.

The catalysed reaction is [thioredoxin]-disulfide + L-methionine + H2O = L-methionine (R)-S-oxide + [thioredoxin]-dithiol. In terms of biological role, catalyzes the reversible oxidation-reduction of the R-enantiomer of free methionine sulfoxide to methionine. Specific for free L-methionine-(R)-S-oxide. This is Free methionine-R-sulfoxide reductase (msrC) from Escherichia coli (strain K12).